A 670-amino-acid chain; its full sequence is Amyloid beta A4 precursor protein-binding family B member 1-interacting protein (670 aa).

At Ser55 the chain carries Phosphoserine. Residues Lys179–Arg266 form the Ras-associating domain. The 110-residue stretch at Val313–Tyr422 folds into the PH domain. Positions Val449–Asp653 are disordered. The segment covering Gln456–Met475 has biased composition (polar residues). A Phosphoserine modification is found at Ser532. Phosphothreonine is present on Thr534. Ser537 is subject to Phosphoserine. Pro residues-rich tracts occupy residues Pro553 to Pro567, Leu576 to Ala599, Leu606 to Cys615, and Pro625 to Pro634.

It belongs to the MRL family. As to quaternary structure, interacts, through the N-terminal Pro-rich region, with the WW domain of APBB1. Interacts with RAP1A, PFN1, VASP and ENAH. In terms of tissue distribution, ubiquitously expressed with high expression in the hematopoietic system.

Its subcellular location is the cell membrane. The protein localises to the cell projection. It localises to the lamellipodium. It is found in the cell junction. The protein resides in the focal adhesion. Its subcellular location is the cytoplasm. The protein localises to the cytoskeleton. Appears to function in the signal transduction from Ras activation to actin cytoskeletal remodeling. Suppresses insulin-induced promoter activities through AP1 and SRE. Mediates Rap1-induced adhesion. The sequence is that of Amyloid beta A4 precursor protein-binding family B member 1-interacting protein (Apbb1ip) from Mus musculus (Mouse).